The primary structure comprises 97 residues: Aspartyl/glutamyl-tRNA(Asn/Gln) amidotransferase subunit C (97 aa).

It belongs to the GatC family. As to quaternary structure, heterotrimer of A, B and C subunits.

The enzyme catalyses L-glutamyl-tRNA(Gln) + L-glutamine + ATP + H2O = L-glutaminyl-tRNA(Gln) + L-glutamate + ADP + phosphate + H(+). The catalysed reaction is L-aspartyl-tRNA(Asn) + L-glutamine + ATP + H2O = L-asparaginyl-tRNA(Asn) + L-glutamate + ADP + phosphate + 2 H(+). In terms of biological role, allows the formation of correctly charged Asn-tRNA(Asn) or Gln-tRNA(Gln) through the transamidation of misacylated Asp-tRNA(Asn) or Glu-tRNA(Gln) in organisms which lack either or both of asparaginyl-tRNA or glutaminyl-tRNA synthetases. The reaction takes place in the presence of glutamine and ATP through an activated phospho-Asp-tRNA(Asn) or phospho-Glu-tRNA(Gln). This chain is Aspartyl/glutamyl-tRNA(Asn/Gln) amidotransferase subunit C, found in Synechococcus sp. (strain JA-3-3Ab) (Cyanobacteria bacterium Yellowstone A-Prime).